The sequence spans 149 residues: UPF0336 protein CMM_2793 (149 aa).

In terms of domain architecture, MaoC-like spans Ala-16–Gly-117.

The protein belongs to the UPF0336 family.

This is UPF0336 protein CMM_2793 from Clavibacter michiganensis subsp. michiganensis (strain NCPPB 382).